The primary structure comprises 507 residues: Alkyl hydroperoxide reductase subunit F (507 aa).

207–222 (DVLIVGGGPASGSAAI) is an FAD binding site. An intrachain disulfide couples C335 to C338. An NAD(+)-binding site is contributed by 347–361 (DVAVIGGGNSGVEAA). 467 to 477 (TNVPGIFAAGD) is an FAD binding site.

This sequence belongs to the class-II pyridine nucleotide-disulfide oxidoreductase family. In terms of assembly, homodimer. It depends on FAD as a cofactor.

Functionally, serves to protect the cell against DNA damage by alkyl hydroperoxides. It can use either NADH or NADPH as electron donor for direct reduction of redox dyes or of alkyl hydroperoxides when combined with the AhpC protein. The polypeptide is Alkyl hydroperoxide reductase subunit F (ahpF) (Staphylococcus epidermidis (strain ATCC 12228 / FDA PCI 1200)).